The chain runs to 144 residues: Hexon-interlacing protein (144 aa).

The stretch at Leu-106–Ala-133 forms a coiled coil.

This sequence belongs to the adenoviridae hexon-interlacing protein family. Homotrimer. Interacts with hexon protein; this interaction tethers the hexons together. Self-interacts with adjacent proteins. Interacts with kinesin light chain KLC1; this interaction leads to capsid disruption at the nuclear pore complex during virus entry into host cell.

Its subcellular location is the virion. The protein localises to the host nucleus. Its function is as follows. Structural component of the virion that acts as a cement protein on the capsid exterior and forms triskelion structures consisting of three molecules that stabilize three hexon trimers at the center of each icosahedral facet and fixes the peripentonal hexons. Dispensable for assembly. During virus entry, recruits the anterograde motor kinesin-1 to the capsid docked at the nuclear pore complex thereby subjecting the docked capsid to a pulling force. The resulting tension leads to capsid disruption, dispersion of capsid fragments toward cell periphery and eventually viral DNA entry into the host nucleus. This is Hexon-interlacing protein from Homo sapiens (Human).